The sequence spans 156 residues: ATP synthase subunit b (156 aa).

A helical membrane pass occupies residues 11 to 31 (AIAFVLFVLFCMKYVWPPLMA).

The protein belongs to the ATPase B chain family. As to quaternary structure, F-type ATPases have 2 components, F(1) - the catalytic core - and F(0) - the membrane proton channel. F(1) has five subunits: alpha(3), beta(3), gamma(1), delta(1), epsilon(1). F(0) has three main subunits: a(1), b(2) and c(10-14). The alpha and beta chains form an alternating ring which encloses part of the gamma chain. F(1) is attached to F(0) by a central stalk formed by the gamma and epsilon chains, while a peripheral stalk is formed by the delta and b chains.

It is found in the cell inner membrane. Its function is as follows. F(1)F(0) ATP synthase produces ATP from ADP in the presence of a proton or sodium gradient. F-type ATPases consist of two structural domains, F(1) containing the extramembraneous catalytic core and F(0) containing the membrane proton channel, linked together by a central stalk and a peripheral stalk. During catalysis, ATP synthesis in the catalytic domain of F(1) is coupled via a rotary mechanism of the central stalk subunits to proton translocation. In terms of biological role, component of the F(0) channel, it forms part of the peripheral stalk, linking F(1) to F(0). This is ATP synthase subunit b from Shigella boydii serotype 18 (strain CDC 3083-94 / BS512).